We begin with the raw amino-acid sequence, 274 residues long: uncharacterized protein (274 aa).

A signal peptide spans 1 to 17; sequence MKKLLAGFLTLSLALAA. A lipid anchor (N-palmitoyl cysteine) is attached at Cys18. Residue Cys18 is the site of S-diacylglycerol cysteine attachment. The segment at 18–169 is disordered; it reads CSNGSDDDSS…DANNGASSAN (152 aa). Over residues 25–76 the composition is skewed to basic and acidic residues; that stretch reads DSSKKDDSSKDNQSSDDKSKDSKNDDKKNNDSDKDKDNNSDSDKNSDSKSDD. Residues 91–169 are compositionally biased toward low complexity; it reads SDNASGSDSS…DANNGASSAN (79 aa).

It localises to the cell membrane. This is an uncharacterized protein from Staphylococcus saprophyticus subsp. saprophyticus (strain ATCC 15305 / DSM 20229 / NCIMB 8711 / NCTC 7292 / S-41).